The sequence spans 106 residues: MSYLIPGELIPEDGFIELNKGRETTTLKVANTSDRPIQIGSHYHFFESNKGLEFDRKKSLGKRLDIPAGTAIRFEPGDQREVNLVPYAGDRKIFGFNGLINNSLQQ.

Belongs to the urease beta subunit family. In terms of assembly, heterotrimer of UreA (gamma), UreB (beta) and UreC (alpha) subunits. Three heterotrimers associate to form the active enzyme.

The protein resides in the cytoplasm. The catalysed reaction is urea + 2 H2O + H(+) = hydrogencarbonate + 2 NH4(+). Its pathway is nitrogen metabolism; urea degradation; CO(2) and NH(3) from urea (urease route): step 1/1. This is Urease subunit beta from Prochlorococcus marinus (strain NATL1A).